A 410-amino-acid chain; its full sequence is Peptidase T (410 aa).

His-79 lines the Zn(2+) pocket. Asp-81 is a catalytic residue. Asp-142 is a binding site for Zn(2+). The Proton acceptor role is filled by Glu-176. Zn(2+) is bound by residues Glu-177, Asp-199, and His-381.

It belongs to the peptidase M20B family. Zn(2+) serves as cofactor.

The protein resides in the cytoplasm. It carries out the reaction Release of the N-terminal residue from a tripeptide.. In terms of biological role, cleaves the N-terminal amino acid of tripeptides. The polypeptide is Peptidase T (Bacillus pumilus (strain SAFR-032)).